We begin with the raw amino-acid sequence, 149 residues long: Stathmin (149 aa).

The residue at position 2 (alanine 2) is an N-acetylalanine. A Phosphoserine modification is found at serine 4. Residues 4 to 145 (SDIQVKELEK…NKESKDPADE (142 aa)) form the SLD domain. Position 9 is an N6-acetyllysine (lysine 9). A Phosphoserine; by PKA modification is found at serine 16. Phosphoserine; by CDK1, MAPK1 and MAPK3 is present on serine 25. The tract at residues 27 to 46 (RSKESVPDFPLSPPKKKDLS) is disordered. Lysine 29 is subject to N6-methyllysine. Serine 31 is modified (phosphoserine). At serine 38 the chain carries Phosphoserine; by CDK1, MAPK1 and MAPK3. Residues 41–140 (KKKDLSLEEI…EEVRKNKESK (100 aa)) are a coiled coil. Serine 63 carries the phosphoserine; by PKA modification. N6-acetyllysine occurs at positions 100 and 119. Residues 104–143 (KMEANKENREAQMAAKLERLREKDKHVEEVRKNKESKDPA) are compositionally biased toward basic and acidic residues. The tract at residues 104-149 (KMEANKENREAQMAAKLERLREKDKHVEEVRKNKESKDPADETEAD) is disordered.

It belongs to the stathmin family. In terms of assembly, binds to two alpha/beta-tubulin heterodimers. Interacts with KIST. Many different phosphorylated forms are observed depending on specific combinations among the sites which can be phosphorylated. MAPK is responsible for the phosphorylation of stathmin in response to NGF. Phosphorylation at Ser-16 seems to be required for neuron polarization. Highly expressed in the lateral nucleus of the amygdala.

It is found in the cytoplasm. Its subcellular location is the cytoskeleton. Its function is as follows. Involved in the regulation of the microtubule (MT) filament system by destabilizing microtubules. Prevents assembly and promotes disassembly of microtubules. Phosphorylation at Ser-16 may be required for axon formation during neurogenesis. Involved in the control of the learned and innate fear. This is Stathmin (Stmn1) from Mus musculus (Mouse).